Reading from the N-terminus, the 307-residue chain is Elongation factor Ts (307 aa).

Residues 80–83 are involved in Mg(2+) ion dislocation from EF-Tu; sequence TDFV.

This sequence belongs to the EF-Ts family.

It localises to the cytoplasm. In terms of biological role, associates with the EF-Tu.GDP complex and induces the exchange of GDP to GTP. It remains bound to the aminoacyl-tRNA.EF-Tu.GTP complex up to the GTP hydrolysis stage on the ribosome. In Azorhizobium caulinodans (strain ATCC 43989 / DSM 5975 / JCM 20966 / LMG 6465 / NBRC 14845 / NCIMB 13405 / ORS 571), this protein is Elongation factor Ts.